Here is a 702-residue protein sequence, read N- to C-terminus: Elongation factor G (702 aa).

The region spanning 8–290 is the tr-type G domain; sequence SRYRNIGISA…AIIEFLPAPN (283 aa). GTP is bound by residues 17 to 24, 88 to 92, and 142 to 145; these read AHIDAGKT, DTPGH, and NKMD.

This sequence belongs to the TRAFAC class translation factor GTPase superfamily. Classic translation factor GTPase family. EF-G/EF-2 subfamily.

The protein localises to the cytoplasm. In terms of biological role, catalyzes the GTP-dependent ribosomal translocation step during translation elongation. During this step, the ribosome changes from the pre-translocational (PRE) to the post-translocational (POST) state as the newly formed A-site-bound peptidyl-tRNA and P-site-bound deacylated tRNA move to the P and E sites, respectively. Catalyzes the coordinated movement of the two tRNA molecules, the mRNA and conformational changes in the ribosome. The protein is Elongation factor G of Buchnera aphidicola subsp. Acyrthosiphon pisum (strain 5A).